A 248-amino-acid chain; its full sequence is 3-deoxy-manno-octulosonate cytidylyltransferase (248 aa).

It belongs to the KdsB family.

It localises to the cytoplasm. It catalyses the reaction 3-deoxy-alpha-D-manno-oct-2-ulosonate + CTP = CMP-3-deoxy-beta-D-manno-octulosonate + diphosphate. It functions in the pathway nucleotide-sugar biosynthesis; CMP-3-deoxy-D-manno-octulosonate biosynthesis; CMP-3-deoxy-D-manno-octulosonate from 3-deoxy-D-manno-octulosonate and CTP: step 1/1. The protein operates within bacterial outer membrane biogenesis; lipopolysaccharide biosynthesis. Its function is as follows. Activates KDO (a required 8-carbon sugar) for incorporation into bacterial lipopolysaccharide in Gram-negative bacteria. The sequence is that of 3-deoxy-manno-octulosonate cytidylyltransferase from Chlorobium chlorochromatii (strain CaD3).